A 317-amino-acid polypeptide reads, in one-letter code: Glutathione synthetase (317 aa).

The 187-residue stretch at 124 to 310 folds into the ATP-grasp domain; the sequence is EKLFTAWFPE…ITGKLMDAIE (187 aa). Residue 150–207 coordinates ATP; sequence FRQEHGDIILKPLDGMGGASIFRVKENDPNVSVIIETLTNHGQNYAMAQTFVPDISNG. Mg(2+)-binding residues include E281 and N283.

The protein belongs to the prokaryotic GSH synthase family. Mg(2+) serves as cofactor. The cofactor is Mn(2+).

It catalyses the reaction gamma-L-glutamyl-L-cysteine + glycine + ATP = glutathione + ADP + phosphate + H(+). It functions in the pathway sulfur metabolism; glutathione biosynthesis; glutathione from L-cysteine and L-glutamate: step 2/2. In Vibrio vulnificus (strain CMCP6), this protein is Glutathione synthetase.